A 262-amino-acid polypeptide reads, in one-letter code: Ribosome-recycling factor, mitochondrial (262 aa).

The transit peptide at 1–55 directs the protein to the mitochondrion; it reads MASGIRCFRLLHPAFRSYHAALTRPVSEVSMKTVSGRQHGHRQYSAYPAVPVRHF.

This sequence belongs to the RRF family.

It localises to the mitochondrion. Functionally, responsible for the disassembly of ribosomes from messenger RNA at the termination of mitochondrial protein biosynthesis. Acts in collaboration with GFM2. Promotes mitochondrial ribosome recycling by dissolution of intersubunit contacts. The chain is Ribosome-recycling factor, mitochondrial (Mrrf) from Mus musculus (Mouse).